Here is a 730-residue protein sequence, read N- to C-terminus: MISVCPQNDLQKCYRSLTFDVPGQQFEERNEQNLKKRAKKKGSFQPSVAFDTVPSTAGYSSIDDSREGFKGVPVPNYYTMEECYDDETDSFSPNLQYYLRDTFQSSPFLNTRKENKSESSSFPMRSSKLLEKNSDIKKYFLVSKNGKIVRRDYPSTPVIVNETLMINRFEKNWIKLWRQRKLQINERLNDKKKWFTYPELIFSEERIKPLYRGDDSAPCTKEQKRKHKILQQKVGYPNNPKTIVCHINGKKHTWVALDWTVYKFARNLDHIVVITTLPKMISNRKKTAKDDTEWAPGYQKEVIDQKLNDIFDYILQLVKVVKISVKITLEIIVGKIKKSLVDVINVHTPDFLVLATLKHERNENLITYKSKKLTDVFPVSYPIPTFVVPSKRMYSFELNLQREVNEHYVSKNHMKHEHTDVESMSSSMFKKNTISDISSHISVDSYAEDFKRQGYIKKQFNTSNDSIPRKLTGLAQHSRRKITGDIEKLQDDEKDRECTKEKLLLKKIDIIIRESLKSSLAIETLPGKNVSQSSHGDQISSFKNALIGNGSKNTKFRKSLIPYSSSEEQNTTTTIKLSSSPTSQIKFATSVKHKDGRAALGKARNLPDIRHSISFDKENSFDPSDKSSSVDNSIPLRKVKSAGALRKVKTNDSSSSAGSKKSSSSFSTVNTFTGGGVGIFKVFKSGSSSGNKSSSRRNSSSGDVFESDDRNDKKKKKKKKKKSLFLFGKI.

Residues Phe615 to Asp625 are compositionally biased toward basic and acidic residues. Disordered regions lie at residues Phe615–Ser667 and Lys684–Ile730. 2 stretches are compositionally biased toward low complexity: residues Ser653–Ser667 and Lys684–Ser701. The segment covering Lys713–Ser723 has biased composition (basic residues).

This is an uncharacterized protein from Saccharomyces cerevisiae (strain ATCC 204508 / S288c) (Baker's yeast).